The following is a 544-amino-acid chain: Protein angel homolog 2 (544 aa).

It belongs to the CCR4/nocturin family.

This chain is Protein angel homolog 2 (Angel2), found in Mus musculus (Mouse).